Consider the following 753-residue polypeptide: Rho guanine nucleotide exchange factor gef1 (753 aa).

Disordered stretches follow at residues 52–150 (SNSY…DRNR), 175–194 (TLRK…RVSG), and 200–245 (AQNS…ASLL). 4 stretches are compositionally biased toward polar residues: residues 94–105 (DPQTPNTPPVSS), 114–141 (GSFN…TLTP), 181–191 (TNTSSNGTSRR), and 200–220 (AQNS…GSST). Low complexity predominate over residues 230-245 (TLASMPSSHSSTASLL). The 197-residue stretch at 311 to 507 (KRANLIKELV…QELISGINQK (197 aa)) folds into the DH domain.

As to quaternary structure, interacts with cdc42.

Its subcellular location is the cytoplasm. Functionally, has a role in the control of cell polarity and cytokinesis. Involved in bipolar growth, via modulation of cdc42-shk1-orb6 signaling, and septum formation. Stimulates guanine nucleotide exchange of cdc42. The protein is Rho guanine nucleotide exchange factor gef1 (gef1) of Schizosaccharomyces pombe (strain 972 / ATCC 24843) (Fission yeast).